Here is a 334-residue protein sequence, read N- to C-terminus: N-acetyl-gamma-glutamyl-phosphate reductase (334 aa).

C145 is a catalytic residue. The segment at 173-192 (GISGSGQDPTEGTHYPNVTQ) is disordered.

Belongs to the NAGSA dehydrogenase family. Type 1 subfamily.

The protein resides in the cytoplasm. The catalysed reaction is N-acetyl-L-glutamate 5-semialdehyde + phosphate + NADP(+) = N-acetyl-L-glutamyl 5-phosphate + NADPH + H(+). It participates in amino-acid biosynthesis; L-arginine biosynthesis; N(2)-acetyl-L-ornithine from L-glutamate: step 3/4. Its function is as follows. Catalyzes the NADPH-dependent reduction of N-acetyl-5-glutamyl phosphate to yield N-acetyl-L-glutamate 5-semialdehyde. This Methanocella arvoryzae (strain DSM 22066 / NBRC 105507 / MRE50) protein is N-acetyl-gamma-glutamyl-phosphate reductase.